The primary structure comprises 561 residues: Liver carboxylesterase B-1 (561 aa).

The signal sequence occupies residues 1 to 18 (MCLRSLFLVSLATCVVCG). Asn-79 carries N-linked (GlcNAc...) asparagine glycosylation. Cys-87 and Cys-116 are oxidised to a cystine. Catalysis depends on Ser-221, which acts as the Acyl-ester intermediate. Cys-273 and Cys-284 are disulfide-bonded. Catalysis depends on charge relay system residues Glu-353 and His-466. A Prevents secretion from ER motif is present at residues 558–561 (HNEL).

It belongs to the type-B carboxylesterase/lipase family. In terms of assembly, monomer.

It localises to the endoplasmic reticulum lumen. It carries out the reaction a carboxylic ester + H2O = an alcohol + a carboxylate + H(+). Involved in the detoxification of xenobiotics and in the activation of ester and amide prodrugs. The protein is Liver carboxylesterase B-1 of Rattus norvegicus (Rat).